The chain runs to 191 residues: CASP-like protein 4C3 (191 aa).

Residues 1–29 (METGDSAVKSSQDVHYYGKSTAQKHRRSN) are Cytoplasmic-facing. A helical membrane pass occupies residues 30 to 50 (GIILIFRALTFSFSLTSVIVM). At 51 to 72 (GTNRHRIDAQSRVAWYDFDPFR) the chain is on the extracellular side. The helical transmembrane segment at 73–93 (YVLAVNAIICIYSFVEIWLAV) threads the bilayer. The Cytoplasmic segment spans residues 94-116 (YTYLKDTLFLPETFQVWFDYGHD). The helical transmembrane segment at 117–137 (QGFAYLLFSANSAGIAMAQLL) threads the bilayer. Residues 138-162 (QSGNSLIHGAYRCSDAGVFCTQARA) lie on the Extracellular side of the membrane. A helical transmembrane segment spans residues 163-183 (SIGLGFGAFLFLALSSLLTGL). Residues 184-191 (RVARWYFS) lie on the Cytoplasmic side of the membrane.

It belongs to the Casparian strip membrane proteins (CASP) family. In terms of assembly, homodimer and heterodimers.

It localises to the cell membrane. This chain is CASP-like protein 4C3, found in Physcomitrium patens (Spreading-leaved earth moss).